A 645-amino-acid chain; its full sequence is 1,4-alpha-glucan branching enzyme GlgB (645 aa).

D309 functions as the Nucleophile in the catalytic mechanism. The active-site Proton donor is the E352. The interval V619–R645 is disordered. Positions R636 to R645 are enriched in polar residues.

The protein belongs to the glycosyl hydrolase 13 family. GlgB subfamily. In terms of assembly, monomer.

It carries out the reaction Transfers a segment of a (1-&gt;4)-alpha-D-glucan chain to a primary hydroxy group in a similar glucan chain.. It functions in the pathway glycan biosynthesis; glycogen biosynthesis. Its function is as follows. Catalyzes the formation of the alpha-1,6-glucosidic linkages in glycogen by scission of a 1,4-alpha-linked oligosaccharide from growing alpha-1,4-glucan chains and the subsequent attachment of the oligosaccharide to the alpha-1,6 position. This is 1,4-alpha-glucan branching enzyme GlgB from Bacillus cereus (strain ATCC 10987 / NRS 248).